The sequence spans 287 residues: 2' cyclic ADP-D-ribose synthase BtTIR (287 aa).

Positions 155–287 (KQYDFFISHA…DDIVENLKNL (133 aa)) constitute a TIR domain. Glu230 is an active-site residue.

As to quaternary structure, homodimer.

The enzyme catalyses NAD(+) = 2'cADPR + nicotinamide + H(+). Functionally, NAD(+) hydrolase (NADase) that cleaves NAD(+) into nicotinamide and 2' cyclic ADP-D-ribose (2'cADPR). This Bacteroides thetaiotaomicron protein is 2' cyclic ADP-D-ribose synthase BtTIR.